Consider the following 2290-residue polypeptide: Protein Ycf2 (2290 aa).

Residues 505–530 form a disordered region; it reads GSNPTERSTRDQKSLKKQQDVSFVPP. Basic and acidic residues predominate over residues 511–523; it reads RSTRDQKSLKKQQ. 1639–1646 lines the ATP pocket; it reads GSIGTGRS.

Belongs to the Ycf2 family.

The protein resides in the plastid. The protein localises to the chloroplast stroma. Functionally, probable ATPase of unknown function. Its presence in a non-photosynthetic plant (Epifagus virginiana) and experiments in tobacco indicate that it has an essential function which is probably not related to photosynthesis. This chain is Protein Ycf2, found in Ceratophyllum demersum (Rigid hornwort).